A 340-amino-acid polypeptide reads, in one-letter code: Phosphoribosylformylglycinamidine cyclo-ligase (340 aa).

This sequence belongs to the AIR synthase family.

The protein resides in the cytoplasm. The catalysed reaction is 2-formamido-N(1)-(5-O-phospho-beta-D-ribosyl)acetamidine + ATP = 5-amino-1-(5-phospho-beta-D-ribosyl)imidazole + ADP + phosphate + H(+). Its pathway is purine metabolism; IMP biosynthesis via de novo pathway; 5-amino-1-(5-phospho-D-ribosyl)imidazole from N(2)-formyl-N(1)-(5-phospho-D-ribosyl)glycinamide: step 2/2. This chain is Phosphoribosylformylglycinamidine cyclo-ligase, found in Streptococcus pneumoniae serotype 19F (strain G54).